The chain runs to 89 residues: Small ribosomal subunit protein uS17 (89 aa).

It belongs to the universal ribosomal protein uS17 family. In terms of assembly, part of the 30S ribosomal subunit.

Functionally, one of the primary rRNA binding proteins, it binds specifically to the 5'-end of 16S ribosomal RNA. This is Small ribosomal subunit protein uS17 from Albidiferax ferrireducens (strain ATCC BAA-621 / DSM 15236 / T118) (Rhodoferax ferrireducens).